A 550-amino-acid chain; its full sequence is Sorting nexin-33 (550 aa).

An SH3 domain is found at 1–61 (MALKARALYS…PASYVEIQSS (61 aa)). The tract at residues 62 to 152 (RSGSVQVDYS…QDSIASGKRG (91 aa)) is disordered. Residues 86–102 (YDDDDEEDDDDWDDWDD) are compositionally biased toward acidic residues. Basic and acidic residues predominate over residues 128–144 (SRPEYSHRPRPALERQD). Positions 206 to 316 (FNCSVEEPTK…HFLGCQDEKQ (111 aa)) constitute a PX domain. One can recognise a BAR domain in the interval 347–550 (LQDVEERVDV…EKTLHLYDEL (204 aa)).

This sequence belongs to the sorting nexin family.

The protein resides in the cytoplasm. The protein localises to the cytosol. Its subcellular location is the membrane. It is found in the cytoplasmic vesicle membrane. Functionally, plays a role in the reorganization of the cytoskeleton, endocytosis and cellular vesicle trafficking, both during interphase and at the end of mitotic cell divisions. Required for efficient progress through mitosis and cytokinesis. Required for normal formation of the cleavage furrow at the end of mitosis. Modulates endocytosis of cell-surface proteins. Promotes membrane tubulation (in vitro). May promote the formation of macropinosomes. This is Sorting nexin-33 (snx33) from Xenopus laevis (African clawed frog).